A 213-amino-acid chain; its full sequence is Chloramphenicol acetyltransferase 2 (213 aa).

The Proton acceptor role is filled by His189.

It belongs to the chloramphenicol acetyltransferase family. As to quaternary structure, homotrimer.

The enzyme catalyses chloramphenicol + acetyl-CoA = chloramphenicol 3-acetate + CoA. Its function is as follows. This enzyme is an effector of chloramphenicol resistance in bacteria. The chain is Chloramphenicol acetyltransferase 2 (cat-IIH) from Haemophilus influenzae.